Consider the following 300-residue polypeptide: CDP-diacylglycerol--serine O-phosphatidyltransferase (300 aa).

Transmembrane regions (helical) follow at residues 10 to 30, 74 to 94, 95 to 115, 135 to 155, 162 to 182, and 207 to 227; these read AVNL…AGLT, IDSL…LYAT, MLST…CVVL, EFFV…LLAL, GWWT…MLLI, and LAIF…VIIL.

This sequence belongs to the CDP-alcohol phosphatidyltransferase class-I family.

The protein resides in the cell membrane. The enzyme catalyses a CDP-1,2-diacyl-sn-glycerol + L-serine = a 1,2-diacyl-sn-glycero-3-phospho-L-serine + CMP + H(+). The protein is CDP-diacylglycerol--serine O-phosphatidyltransferase (pssA) of Mycobacterium leprae (strain TN).